The following is a 235-amino-acid chain: MAQSKEQRVHDVFQSIYKKYDVMNSVISLQQHKSWRKDTMKQMDVQAGTSALDVCCGTGDWTLALSEAVGEQGSVIGLDFSENMLAVGREKVAAAKRTNISLVHGNAMALPYDDNTFDYVTIGFGLRNVPDYMQVLQEMCRVAKPGGKIVCLETSQPTIPVFKQLYFFYFKRIMPLAGKVFAKKYEEYSWLQESTLAFPGKDKLRDMFVEAGMKDVTVKSYTGGVCAMHMGIKPI.

S-adenosyl-L-methionine-binding positions include Thr-58, Asp-79, and 106–107 (NA).

Belongs to the class I-like SAM-binding methyltransferase superfamily. MenG/UbiE family.

The enzyme catalyses a 2-demethylmenaquinol + S-adenosyl-L-methionine = a menaquinol + S-adenosyl-L-homocysteine + H(+). It participates in quinol/quinone metabolism; menaquinone biosynthesis; menaquinol from 1,4-dihydroxy-2-naphthoate: step 2/2. Functionally, methyltransferase required for the conversion of demethylmenaquinol (DMKH2) to menaquinol (MKH2). The sequence is that of Demethylmenaquinone methyltransferase from Shouchella clausii (strain KSM-K16) (Alkalihalobacillus clausii).